Here is a 226-residue protein sequence, read N- to C-terminus: PKHD-type hydroxylase LHK_00496 (226 aa).

A Fe2OG dioxygenase domain is found at 78–178; it reads RFFPPLFNRY…RVASFMWIQS (101 aa). H96, D98, and H159 together coordinate Fe cation. R169 is a 2-oxoglutarate binding site.

Fe(2+) is required as a cofactor. It depends on L-ascorbate as a cofactor.

The polypeptide is PKHD-type hydroxylase LHK_00496 (Laribacter hongkongensis (strain HLHK9)).